The sequence spans 306 residues: tRNA dimethylallyltransferase 1 (306 aa).

Residue 15–22 coordinates ATP; the sequence is GPTGSGKS. A substrate-binding site is contributed by 17-22; that stretch reads TGSGKS. Residues 40-43 form an interaction with substrate tRNA region; that stretch reads DSMQ.

This sequence belongs to the IPP transferase family. In terms of assembly, monomer. Requires Mg(2+) as cofactor.

The enzyme catalyses adenosine(37) in tRNA + dimethylallyl diphosphate = N(6)-dimethylallyladenosine(37) in tRNA + diphosphate. Functionally, catalyzes the transfer of a dimethylallyl group onto the adenine at position 37 in tRNAs that read codons beginning with uridine, leading to the formation of N6-(dimethylallyl)adenosine (i(6)A). This Citrifermentans bemidjiense (strain ATCC BAA-1014 / DSM 16622 / JCM 12645 / Bem) (Geobacter bemidjiensis) protein is tRNA dimethylallyltransferase 1.